The following is a 258-amino-acid chain: Phosphate import ATP-binding protein PstB 1 (258 aa).

In terms of domain architecture, ABC transporter spans L5 to K247. G37–T44 lines the ATP pocket.

This sequence belongs to the ABC transporter superfamily. Phosphate importer (TC 3.A.1.7) family. The complex is composed of two ATP-binding proteins (PstB), two transmembrane proteins (PstC and PstA) and a solute-binding protein (PstS).

It localises to the cell membrane. The enzyme catalyses phosphate(out) + ATP + H2O = ADP + 2 phosphate(in) + H(+). Part of the ABC transporter complex PstSACB involved in phosphate import. Responsible for energy coupling to the transport system. The protein is Phosphate import ATP-binding protein PstB 1 of Mycobacterium tuberculosis (strain CDC 1551 / Oshkosh).